The primary structure comprises 251 residues: Methionine aminopeptidase (251 aa).

A substrate-binding site is contributed by histidine 76. The a divalent metal cation site is built by aspartate 93, aspartate 104, and histidine 168. Histidine 175 is a substrate binding site. A divalent metal cation contacts are provided by glutamate 202 and glutamate 233.

The protein belongs to the peptidase M24A family. Methionine aminopeptidase type 1 subfamily. Monomer. It depends on Co(2+) as a cofactor. Zn(2+) is required as a cofactor. Requires Mn(2+) as cofactor. Fe(2+) serves as cofactor.

It carries out the reaction Release of N-terminal amino acids, preferentially methionine, from peptides and arylamides.. Removes the N-terminal methionine from nascent proteins. The N-terminal methionine is often cleaved when the second residue in the primary sequence is small and uncharged (Met-Ala-, Cys, Gly, Pro, Ser, Thr, or Val). Requires deformylation of the N(alpha)-formylated initiator methionine before it can be hydrolyzed. The polypeptide is Methionine aminopeptidase (Staphylococcus epidermidis (strain ATCC 12228 / FDA PCI 1200)).